Here is a 526-residue protein sequence, read N- to C-terminus: GMP synthase [glutamine-hydrolyzing] (526 aa).

The region spanning 8–208 (CILIIDFGSQ…AVDICRCEVT (201 aa)) is the Glutamine amidotransferase type-1 domain. The Nucleophile role is filled by Cys85. Residues His182 and Glu184 contribute to the active site. One can recognise a GMPS ATP-PPase domain in the interval 209 to 401 (WKPVYIVKNI…LGLPLNVVNQ (193 aa)). ATP is bound at residue 236 to 242 (SGGIDSL).

Homodimer.

It carries out the reaction XMP + L-glutamine + ATP + H2O = GMP + L-glutamate + AMP + diphosphate + 2 H(+). Its pathway is purine metabolism; GMP biosynthesis; GMP from XMP (L-Gln route): step 1/1. Functionally, catalyzes the synthesis of GMP from XMP. The protein is GMP synthase [glutamine-hydrolyzing] of Blochmanniella floridana.